The sequence spans 571 residues: Proline--tRNA ligase (571 aa).

The protein belongs to the class-II aminoacyl-tRNA synthetase family. ProS type 1 subfamily. In terms of assembly, homodimer.

Its subcellular location is the cytoplasm. The catalysed reaction is tRNA(Pro) + L-proline + ATP = L-prolyl-tRNA(Pro) + AMP + diphosphate. Catalyzes the attachment of proline to tRNA(Pro) in a two-step reaction: proline is first activated by ATP to form Pro-AMP and then transferred to the acceptor end of tRNA(Pro). As ProRS can inadvertently accommodate and process non-cognate amino acids such as alanine and cysteine, to avoid such errors it has two additional distinct editing activities against alanine. One activity is designated as 'pretransfer' editing and involves the tRNA(Pro)-independent hydrolysis of activated Ala-AMP. The other activity is designated 'posttransfer' editing and involves deacylation of mischarged Ala-tRNA(Pro). The misacylated Cys-tRNA(Pro) is not edited by ProRS. This chain is Proline--tRNA ligase, found in Syntrophotalea carbinolica (strain DSM 2380 / NBRC 103641 / GraBd1) (Pelobacter carbinolicus).